Here is a 328-residue protein sequence, read N- to C-terminus: POU domain, class 5, transcription factor 2 (328 aa).

The interval 1–25 (MAGHRPSNHFCPLPGSGGGGPRGPM) is disordered. Residues 118–192 (DISGILKELQ…LLKKWLKEVE (75 aa)) form the POU-specific domain. Residues 210–269 (GKWRRASRERRIGNSLEKFFQRCPKPTPQQISHIAGCLQLQKDVVRVWFYNRSKMGSRPT) constitute a DNA-binding region (homeobox).

It belongs to the POU transcription factor family. Class-5 subfamily. In terms of tissue distribution, expressed in skeletal and cardiac muscles, brain, heart and lung. Little or no detectable expression found in pancreas, kidney, liver or placenta.

The protein resides in the nucleus. In terms of biological role, transcription factor that binds preferentially to the octamer motif (5'-ATGTTAAT-3'). May exert a regulatory function in meiotic events that are required for terminal differentiation of male germ cell. The protein is POU domain, class 5, transcription factor 2 (POU5F2) of Homo sapiens (Human).